Reading from the N-terminus, the 211-residue chain is tRNA (guanine-N(7)-)-methyltransferase (211 aa).

S-adenosyl-L-methionine is bound by residues Glu44, Asp69, Asp96, and Asp118. Asp118 is a catalytic residue. Lys122 serves as a coordination point for substrate. The interaction with RNA stretch occupies residues Arg124–Arg129. Residues Asp154 and Thr191–Glu194 each bind substrate.

This sequence belongs to the class I-like SAM-binding methyltransferase superfamily. TrmB family.

The enzyme catalyses guanosine(46) in tRNA + S-adenosyl-L-methionine = N(7)-methylguanosine(46) in tRNA + S-adenosyl-L-homocysteine. Its pathway is tRNA modification; N(7)-methylguanine-tRNA biosynthesis. Catalyzes the formation of N(7)-methylguanine at position 46 (m7G46) in tRNA. The chain is tRNA (guanine-N(7)-)-methyltransferase from Streptococcus pneumoniae (strain JJA).